A 66-amino-acid chain; its full sequence is Sec-independent protein translocase protein TatA (66 aa).

A helical membrane pass occupies residues Met-1–Arg-21. The interval Ala-43–Glu-66 is disordered. Over residues Pro-50–Glu-66 the composition is skewed to basic and acidic residues.

The protein belongs to the TatA/E family. As to quaternary structure, the Tat system comprises two distinct complexes: a TatABC complex, containing multiple copies of TatA, TatB and TatC subunits, and a separate TatA complex, containing only TatA subunits. Substrates initially bind to the TatABC complex, which probably triggers association of the separate TatA complex to form the active translocon.

The protein localises to the cell inner membrane. Functionally, part of the twin-arginine translocation (Tat) system that transports large folded proteins containing a characteristic twin-arginine motif in their signal peptide across membranes. TatA could form the protein-conducting channel of the Tat system. This Pelagibacter ubique (strain HTCC1062) protein is Sec-independent protein translocase protein TatA.